A 267-amino-acid polypeptide reads, in one-letter code: tRNA-cytidine(32) 2-sulfurtransferase (267 aa).

The PP-loop motif motif lies at 37 to 42 (SGGKDS). Residues C112, C115, and C203 each contribute to the [4Fe-4S] cluster site.

Belongs to the TtcA family. In terms of assembly, homodimer. Mg(2+) is required as a cofactor. [4Fe-4S] cluster serves as cofactor.

The protein resides in the cytoplasm. It carries out the reaction cytidine(32) in tRNA + S-sulfanyl-L-cysteinyl-[cysteine desulfurase] + AH2 + ATP = 2-thiocytidine(32) in tRNA + L-cysteinyl-[cysteine desulfurase] + A + AMP + diphosphate + H(+). It functions in the pathway tRNA modification. Its function is as follows. Catalyzes the ATP-dependent 2-thiolation of cytidine in position 32 of tRNA, to form 2-thiocytidine (s(2)C32). The sulfur atoms are provided by the cysteine/cysteine desulfurase (IscS) system. The sequence is that of tRNA-cytidine(32) 2-sulfurtransferase from Dichelobacter nodosus (strain VCS1703A).